The primary structure comprises 141 residues: Nucleoside diphosphate kinase (141 aa).

ATP contacts are provided by K11, F59, R87, T93, R104, and N114. The Pros-phosphohistidine intermediate role is filled by H117.

This sequence belongs to the NDK family. Homotetramer. Mg(2+) is required as a cofactor.

The protein localises to the cytoplasm. It carries out the reaction a 2'-deoxyribonucleoside 5'-diphosphate + ATP = a 2'-deoxyribonucleoside 5'-triphosphate + ADP. The enzyme catalyses a ribonucleoside 5'-diphosphate + ATP = a ribonucleoside 5'-triphosphate + ADP. Functionally, major role in the synthesis of nucleoside triphosphates other than ATP. The ATP gamma phosphate is transferred to the NDP beta phosphate via a ping-pong mechanism, using a phosphorylated active-site intermediate. This chain is Nucleoside diphosphate kinase, found in Legionella pneumophila subsp. pneumophila (strain Philadelphia 1 / ATCC 33152 / DSM 7513).